A 159-amino-acid chain; its full sequence is Ribosomal RNA large subunit methyltransferase H (159 aa).

S-adenosyl-L-methionine contacts are provided by residues L76, G108, and L127 to F132.

Belongs to the RNA methyltransferase RlmH family. In terms of assembly, homodimer.

Its subcellular location is the cytoplasm. It catalyses the reaction pseudouridine(1915) in 23S rRNA + S-adenosyl-L-methionine = N(3)-methylpseudouridine(1915) in 23S rRNA + S-adenosyl-L-homocysteine + H(+). Specifically methylates the pseudouridine at position 1915 (m3Psi1915) in 23S rRNA. This Syntrophomonas wolfei subsp. wolfei (strain DSM 2245B / Goettingen) protein is Ribosomal RNA large subunit methyltransferase H.